Consider the following 367-residue polypeptide: tRNA-specific 2-thiouridylase MnmA (367 aa).

Residues 12–19 and methionine 38 contribute to the ATP site; that span reads GMSGGVDS. The interaction with target base in tRNA stretch occupies residues 98-100; the sequence is NPD. The active-site Nucleophile is the cysteine 103. An intrachain disulfide couples cysteine 103 to cysteine 200. Glycine 128 lines the ATP pocket. The segment at 150–152 is interaction with tRNA; that stretch reads KDQ. Cysteine 200 (cysteine persulfide intermediate) is an active-site residue. The interval 312–313 is interaction with tRNA; the sequence is RY.

The protein belongs to the MnmA/TRMU family.

It localises to the cytoplasm. It carries out the reaction S-sulfanyl-L-cysteinyl-[protein] + uridine(34) in tRNA + AH2 + ATP = 2-thiouridine(34) in tRNA + L-cysteinyl-[protein] + A + AMP + diphosphate + H(+). In terms of biological role, catalyzes the 2-thiolation of uridine at the wobble position (U34) of tRNA, leading to the formation of s(2)U34. This is tRNA-specific 2-thiouridylase MnmA from Psychromonas ingrahamii (strain DSM 17664 / CCUG 51855 / 37).